We begin with the raw amino-acid sequence, 175 residues long: ATP synthase subunit b (175 aa).

The helical transmembrane segment at 20–40 (LIFWTAITFVIVLLILKKIAW) threads the bilayer.

Belongs to the ATPase B chain family. F-type ATPases have 2 components, F(1) - the catalytic core - and F(0) - the membrane proton channel. F(1) has five subunits: alpha(3), beta(3), gamma(1), delta(1), epsilon(1). F(0) has four main subunits: a(1), b(2) and c(10-14). The alpha and beta chains form an alternating ring which encloses part of the gamma chain. F(1) is attached to F(0) by a central stalk formed by the gamma and epsilon chains, while a peripheral stalk is formed by the delta and b chains.

The protein resides in the cell inner membrane. Functionally, f(1)F(0) ATP synthase produces ATP from ADP in the presence of a proton or sodium gradient. F-type ATPases consist of two structural domains, F(1) containing the extramembraneous catalytic core and F(0) containing the membrane proton channel, linked together by a central stalk and a peripheral stalk. During catalysis, ATP synthesis in the catalytic domain of F(1) is coupled via a rotary mechanism of the central stalk subunits to proton translocation. Its function is as follows. Component of the F(0) channel, it forms part of the peripheral stalk, linking F(1) to F(0). This is ATP synthase subunit b from Chlorobium chlorochromatii (strain CaD3).